The sequence spans 89 residues: Small ribosomal subunit protein uS15 (89 aa).

This sequence belongs to the universal ribosomal protein uS15 family. As to quaternary structure, part of the 30S ribosomal subunit. Forms a bridge to the 50S subunit in the 70S ribosome, contacting the 23S rRNA.

One of the primary rRNA binding proteins, it binds directly to 16S rRNA where it helps nucleate assembly of the platform of the 30S subunit by binding and bridging several RNA helices of the 16S rRNA. Its function is as follows. Forms an intersubunit bridge (bridge B4) with the 23S rRNA of the 50S subunit in the ribosome. This chain is Small ribosomal subunit protein uS15, found in Dictyoglomus thermophilum (strain ATCC 35947 / DSM 3960 / H-6-12).